The chain runs to 415 residues: MEDLCVANTLFALNLFKHLAKASPTQNLFLSPWSISSTMAMVYMGSRGSTEDQMAKVLQFNEVGANAVTPMTPENFTSCGFMQQIQKGSYPDAILQAQAADKIHSSFRSLSSAINASTGNYLLESVNKLFGEKSASFREEYIRLCQKYYSSEPQAVDFLECAEEARKKINSWVKTQTKGKIPNLLPEGSVDGDTRMVLVNAVYFKGKWKTPFEKKLNGLYPFRVNSAQRTPVQMMYLREKLNIGYIEDLKAQILELPYAGDVSMFLLLPDEIADVSTGLELLESEITYDKLNKWTSKDKMAEDEVEVYIPQFKLEEHYELRSILRSMGMEDAFNKGRANFSGMSERNDLFLSEVFHQAMVDVNEEGTEAAAGTGGVMTGRTGHGGPQFVADHPFLFLIMHKITNCILFFGRFSSP.

A disulfide bond links Cys-5 and Cys-405. N-linked (GlcNAc...) asparagine glycans are attached at residues Asn-75, Asn-115, and Asn-339.

This sequence belongs to the serpin family. Ov-serpin subfamily. In terms of assembly, interacts with PSMB1. The signal sequence is not cleaved.

The protein localises to the cytoplasm. It localises to the secreted. Its subcellular location is the extracellular space. In terms of biological role, inhibits urokinase-type plasminogen activator. The monocyte derived PAI-2 is distinct from the endothelial cell-derived PAI-1. This Homo sapiens (Human) protein is Plasminogen activator inhibitor 2 (SERPINB2).